A 1216-amino-acid chain; its full sequence is MCLPSCLLSIWVLFMAAQSLGKTWVPDHCRSPTEATCNFVCDCGDCSDEAQCGFHGASTTPNTPFTCNFEQDPCGWQDISTSGYRWLRDRAGAGLDSSGPHSDHTRGTDLGWYMAVGTHSGKEPSTRTLRSPVMREAAPTCELRLWYHTDSRDVAELRLDLTHGMETLTLWQSSGPWGPWPGRELAVNTGRIQGDFKVTFSATRNATHRGAVALDDMEFWDCGLPIPQARCPLGHHHCQNKACVEPHQLCDGEDNCGDSSDEDPLICSHHMATDFETGLGPWTQLEGWTRNFSAGSMVSPAWPHRDHSRNSAYGFFLVSVAKPGTTAVLYSPEFQGSVSYNCSFTFYYYLHGSEANQFQLFVQAQGLNTTQPPVLLRSRHGELGTAWVRDRVNIQSAHPFRILLAGETGPGGFVGLDDLIMSNHCILVPGMSTLQSSLSGPVPLALYPQTSIKRTCDAGHLSCDELCVPPEQLCDFQQHCAEGEDEEKCGTTDFESASAGGWEDISIGKLQWQRAEAQESGKPARDTNRNAPGHFLSLRKAWGQLRSEARALTPTLGPSGPHCELHMTYYFHSHPQGFLALAVVENGFRELLWQAPSSSSGGWTLQKILLGARRWPFQLEFVSLVDLDGPGQQGAGVDNVTLRDCNPMVTTESDQEVSCNFERDSCSWHTGHLTDAHWHRVKSHGSQYDHTTGQGFFMFLDPMDPPARGQGALLLTRPQVPVVPKECLSFWYHLHGPQIGTLCLAMRREGEEDTLLWSRSGTHGNRWHQAWVTLHHQLQPSTKYQLLFEGLRDGYHGTMGLDDMAVRPGPCWAAKRCSFEDSDCGFSPGDWGLWTRQNNASGLGPWGPWIDHTTGTAQGHYMVVDTSPNLLPKGHVASLTSEEHPPLSRPACLSFWYHLSFHNPGTLRVFVEESTRRQELSISGHGGFAWRLGSVNVQAEQAWKVVFEAMASGVEHSYMALDDISLQDGPCAQPGSCDFESGLCGWSHLPWPGLGGYSWDWSSGATPSRYPRPSVDHTVGTEAGHFAFFETSVLGPGGQAAWLGSEPLPATAVSCLHFWYYMGFPAHFYKGELRVLLSSTQGQLAVWHRGGHLRDQWLQVQIEVSSSEEFQIVFEATLGGQPALGPIALDDVEYLAGQHCKQPTPSQGRVAAPVSVPVAVGGALLLFLLLLGLGGWHWLQKQHLPCQSTDAAASGFDNILFNADQVTLPESITSNP.

An N-terminal signal peptide occupies residues 1–21 (MCLPSCLLSIWVLFMAAQSLG). Topologically, residues 22-1155 (KTWVPDHCRS…SQGRVAAPVS (1134 aa)) are extracellular. Positions 27 to 54 (DHCRSPTEATCNFVCDCGDCSDEAQCGF) constitute an LDL-receptor class A 1; truncated domain. An MAM 1 domain is found at 62–224 (NTPFTCNFEQ…DDMEFWDCGL (163 aa)). N205 carries an N-linked (GlcNAc...) asparagine glycan. The LDL-receptor class A 2 domain occupies 229-269 (ARCPLGHHHCQNKACVEPHQLCDGEDNCGDSSDEDPLICSH). 3 disulfides stabilise this stretch: C231–C243, C238–C256, and C250–C267. In terms of domain architecture, MAM 2 spans 268 to 427 (SHHMATDFET…DLIMSNHCIL (160 aa)). Residues N291, N341, and N368 are each glycosylated (N-linked (GlcNAc...) asparagine). The LDL-receptor class A 3 domain maps to 454-491 (RTCDAGHLSCDELCVPPEQLCDFQQHCAEGEDEEKCGT). 3 disulfides stabilise this stretch: C456-C467, C463-C480, and C474-C489. MAM domains lie at 492-647 (TDFE…DCNP), 654-813 (DQEV…PCWA), 812-973 (WAAK…PCAQ), and 972-1142 (AQPG…HCKQ). A glycan (N-linked (GlcNAc...) asparagine) is linked at N639. N839 is a glycosylation site (N-linked (GlcNAc...) asparagine). A helical transmembrane segment spans residues 1156 to 1176 (VPVAVGGALLLFLLLLGLGGW). At 1177–1216 (HWLQKQHLPCQSTDAAASGFDNILFNADQVTLPESITSNP) the chain is on the cytoplasmic side.

In terms of tissue distribution, apical endosomal tubules of developing rat intestinal epithelial cells.

Its subcellular location is the membrane. Probably involved in the sorting and selective transport of receptors and ligands across polarized epithelia. In Rattus norvegicus (Rat), this protein is Apical endosomal glycoprotein (Mamdc4).